We begin with the raw amino-acid sequence, 723 residues long: Methionine--tRNA ligase (723 aa).

The short motif at 11–21 (PYANGPIHAGH) is the 'HIGH' region element. The Zn(2+) site is built by Cys-143, Cys-146, Cys-156, and Cys-159. The 'KMSKS' region motif lies at 344-348 (KFSTS). Thr-347 contacts ATP. The 101-residue stretch at 623-723 (DFAKLDLRVG…KEVKLGAKVR (101 aa)) folds into the tRNA-binding domain.

It belongs to the class-I aminoacyl-tRNA synthetase family. MetG type 1 subfamily. Homodimer. Requires Zn(2+) as cofactor.

It localises to the cytoplasm. It carries out the reaction tRNA(Met) + L-methionine + ATP = L-methionyl-tRNA(Met) + AMP + diphosphate. Is required not only for elongation of protein synthesis but also for the initiation of all mRNA translation through initiator tRNA(fMet) aminoacylation. The sequence is that of Methionine--tRNA ligase from Pyrococcus horikoshii (strain ATCC 700860 / DSM 12428 / JCM 9974 / NBRC 100139 / OT-3).